The chain runs to 610 residues: Calcium-dependent protein kinase 1 (610 aa).

G2 carries the N-myristoyl glycine lipid modification. A lipid anchor (S-palmitoyl cysteine) is attached at C5. The interval 17 to 133 is disordered; that stretch reads VSAAMWRPRD…HMKRVSSAGL (117 aa). 2 stretches are compositionally biased toward basic and acidic residues: residues 47-56 and 70-117; these read LRSRLSDEVQ and TDVE…DPPA. Residues 118 to 127 are compositionally biased toward basic residues; sequence KPKKPKHMKR. Residues 150–408 form the Protein kinase domain; the sequence is YSLGRKLGQG…AHQVLCHPWV (259 aa). ATP is bound by residues 156-164 and K179; that span reads LGQGQFGTT. The active-site Proton acceptor is D274. Phosphoserine is present on S314. Residues 414 to 444 are autoinhibitory domain; the sequence is APDKPLDSAVLSRMKQFSAMNKFKKMALRVI. EF-hand domains lie at 451–486, 487–522, 523–558, and 559–592; these read EEIA…VGAN, LKES…LNKI, ERED…FGVE, and DVRI…GSIT. Residues D464, D466, S468, Q470, E475, D500, D502, S504, T506, E511, D536, D538, S540, Y542, E547, D570, D572, D574, R576, and E581 each contribute to the Ca(2+) site.

This sequence belongs to the protein kinase superfamily. Ser/Thr protein kinase family. CDPK subfamily. As to quaternary structure, interacts with 14-3-3 proteins.

Its subcellular location is the peroxisome membrane. It carries out the reaction L-seryl-[protein] + ATP = O-phospho-L-seryl-[protein] + ADP + H(+). The enzyme catalyses L-threonyl-[protein] + ATP = O-phospho-L-threonyl-[protein] + ADP + H(+). Its activity is regulated as follows. Activated by calcium. Autophosphorylation may play an important role in the regulation of the kinase activity. May play a role in signal transduction pathways that involve calcium as a second messenger. Phosphorylates the Ca(2+)-ATPase ACA2 resulting in the inhibition of its calcium activation. The sequence is that of Calcium-dependent protein kinase 1 (CPK1) from Arabidopsis thaliana (Mouse-ear cress).